The following is a 725-amino-acid chain: Exocyst complex component 8 (725 aa).

Residue serine 19 is modified to Phosphoserine. Residues 116-159 are disordered; that stretch reads AASGGEEGGGGAGGRDQLRGQTGFFPSPGGASRDGSGPGEEGKQ. Positions 120 to 129 are enriched in gly residues; that stretch reads GEEGGGGAGG. One can recognise a PH domain in the interval 182–282; sequence YLVYNGDLVE…WLEVLEETKR (101 aa). The tract at residues 285 to 322 is disordered; the sequence is SEKRRREQEEAAAPRGPPQVTPKASNPFEDEDDDEPTV. Acidic residues predominate over residues 312 to 322; sequence FEDEDDDEPTV.

Belongs to the EXO84 family. In terms of assembly, the exocyst complex is composed of EXOC1, EXOC2, EXOC3, EXOC4, EXOC5, EXOC6, EXOC7 and EXOC8. Interacts (via PH domain) with GTP-bound RALA and RALB. Interacts with SH3BP1; required for the localization of both SH3BP1 and the exocyst to the leading edge of migrating cells.

It is found in the cytoplasm. Its subcellular location is the perinuclear region. It localises to the cell projection. The protein resides in the growth cone. In terms of biological role, component of the exocyst complex involved in the docking of exocytic vesicles with fusion sites on the plasma membrane. The chain is Exocyst complex component 8 (EXOC8) from Bos taurus (Bovine).